The primary structure comprises 369 residues: Protein-glutamate methylesterase/protein-glutamine glutaminase 1 (369 aa).

The 118-residue stretch at 11-128 folds into the Response regulatory domain; it reads RVLIVDDSAA…DLERQEASIR (118 aa). Asp62 bears the 4-aspartylphosphate mark. A disordered region spans residues 136-168; it reads ATETTRRRSQPEPRPLAPGPKLTADEILPARPP. The CheB-type methylesterase domain occupies 170 to 358; that stretch reads PVPETMPVVC…LDRLAARIME (189 aa). Catalysis depends on residues Ser183, His209, and Asp305.

It belongs to the CheB family. Post-translationally, phosphorylated by CheA. Phosphorylation of the N-terminal regulatory domain activates the methylesterase activity.

It is found in the cytoplasm. It carries out the reaction [protein]-L-glutamate 5-O-methyl ester + H2O = L-glutamyl-[protein] + methanol + H(+). The enzyme catalyses L-glutaminyl-[protein] + H2O = L-glutamyl-[protein] + NH4(+). Functionally, involved in chemotaxis. Part of a chemotaxis signal transduction system that modulates chemotaxis in response to various stimuli. Catalyzes the demethylation of specific methylglutamate residues introduced into the chemoreceptors (methyl-accepting chemotaxis proteins or MCP) by CheR. Also mediates the irreversible deamidation of specific glutamine residues to glutamic acid. This Cereibacter sphaeroides (strain ATCC 17023 / DSM 158 / JCM 6121 / CCUG 31486 / LMG 2827 / NBRC 12203 / NCIMB 8253 / ATH 2.4.1.) (Rhodobacter sphaeroides) protein is Protein-glutamate methylesterase/protein-glutamine glutaminase 1.